An 842-amino-acid polypeptide reads, in one-letter code: Glycogen phosphorylase, muscle form (842 aa).

Ser2 is modified (N-acetylserine). Ser15 is subject to Phosphoserine; by PHK; in form phosphorylase A. Positions 43 and 76 each coordinate AMP. 2 positions are modified to phosphotyrosine: Tyr204 and Tyr227. Arg310–Cys319 lines the AMP pocket. Position 430 is a phosphoserine (Ser430). Position 473 is a phosphotyrosine (Tyr473). Lys681 bears the N6-(pyridoxal phosphate)lysine mark. Ser747 and Ser748 each carry phosphoserine.

The protein belongs to the glycogen phosphorylase family. As to quaternary structure, homodimer. Homotetramer; to form the enzymatically active phosphorylase A. The cofactor is pyridoxal 5'-phosphate. Phosphorylation of Ser-15 converts phosphorylase B (unphosphorylated) to phosphorylase A.

The enzyme catalyses [(1-&gt;4)-alpha-D-glucosyl](n) + phosphate = [(1-&gt;4)-alpha-D-glucosyl](n-1) + alpha-D-glucose 1-phosphate. Allosterically regulated through the non-covalent binding of metabolites, being activated by AMP and inhibited by ATP, ADP, and glucose-6-phosphate. The activity is also controlled by post-translational modifications including phosphorylation. Allosteric enzyme that catalyzes the rate-limiting step in glycogen catabolism, the phosphorolytic cleavage of glycogen to produce glucose-1-phosphate, and plays a central role in maintaining cellular and organismal glucose homeostasis. In Ovis aries (Sheep), this protein is Glycogen phosphorylase, muscle form.